The primary structure comprises 791 residues: Leucine-rich repeat-containing protein SOG2 (791 aa).

A disordered region spans residues 1–28; that stretch reads MVATSSKRTLDPKEEHLPADKTSTNSSN. Over residues 8–19 the composition is skewed to basic and acidic residues; that stretch reads RTLDPKEEHLPA. LRR repeat units follow at residues 43-64, 67-88, 90-111, 113-134, 138-159, and 163-183; these read SGTT…DVGY, NVER…FKRL, RLQY…LTQC, QLEI…ISSF, NIRV…KSIT, and KLSI…DQVQ. Threonine 214 carries the phosphothreonine modification. Disordered stretches follow at residues 454-506 and 534-569; these read ASKA…TPSA and HTHG…PRQQ. Residues 469–486 show a composition bias toward low complexity; that stretch reads SSSSITSGGGPAASTTST. The segment covering 544–569 has biased composition (polar residues); the sequence is NAISNGSSQTNMNEVKTTSDTIPRQQ.

It localises to the cytoplasm. Its function is as follows. Required for proper cell morphogenesis and cell separation after mitosis. Functions in the RAM (regulation of ACE2 activity and cellular morphogenesis) signaling network and is required for proper ACE2 localization and CBK1 kinase activity. This chain is Leucine-rich repeat-containing protein SOG2, found in Saccharomyces cerevisiae (strain ATCC 204508 / S288c) (Baker's yeast).